Reading from the N-terminus, the 717-residue chain is Polyribonucleotide nucleotidyltransferase (717 aa).

Residues D487 and D493 each contribute to the Mg(2+) site. A KH domain is found at 554 to 613 (PKIITMAINPDKIRDVIGPSGKQINKIIEETGVKIDIEQDGTVFISSINQEMNEKAKKII). In terms of domain architecture, S1 motif spans 623-691 (GEIYLGKVKR…KQGRVNLSRK (69 aa)).

The protein belongs to the polyribonucleotide nucleotidyltransferase family. Requires Mg(2+) as cofactor.

It localises to the cytoplasm. The enzyme catalyses RNA(n+1) + phosphate = RNA(n) + a ribonucleoside 5'-diphosphate. Involved in mRNA degradation. Catalyzes the phosphorolysis of single-stranded polyribonucleotides processively in the 3'- to 5'-direction. In Bacillus mycoides (strain KBAB4) (Bacillus weihenstephanensis), this protein is Polyribonucleotide nucleotidyltransferase.